The primary structure comprises 186 residues: TATA-box-binding protein E (186 aa).

Repeat copies occupy residues 10–86 (IENV…FDKL) and 101–179 (VQNI…TSRL).

This sequence belongs to the TBP family.

In terms of biological role, general factor that plays a role in the activation of archaeal genes transcribed by RNA polymerase. Binds specifically to the TATA box promoter element which lies close to the position of transcription initiation. The polypeptide is TATA-box-binding protein E (tbpE) (Halobacterium salinarum (strain ATCC 700922 / JCM 11081 / NRC-1) (Halobacterium halobium)).